A 341-amino-acid polypeptide reads, in one-letter code: Malate dehydrogenase, mitochondrial (341 aa).

Residues 35–41 and D61 each bind NAD(+); that span reads GAGGGIG. Substrate-binding residues include R109 and R115. N122 contributes to the NAD(+) binding site. Residues N147 and R181 each contribute to the substrate site. The active-site Proton acceptor is H205. Position 254 (M254) interacts with NAD(+).

Belongs to the LDH/MDH superfamily. MDH type 1 family. Homodimer.

Its subcellular location is the mitochondrion matrix. It catalyses the reaction (S)-malate + NAD(+) = oxaloacetate + NADH + H(+). This Schizosaccharomyces pombe (strain 972 / ATCC 24843) (Fission yeast) protein is Malate dehydrogenase, mitochondrial (MDH1).